The sequence spans 201 residues: Natural cytotoxicity triggering receptor 3 (201 aa).

A signal peptide spans 1–18; it reads MAWMLLLILIMVHPGSCA. An Ig-like domain is found at 19 to 126; the sequence is LWVSQPPEIR…VGTGNGTRLV (108 aa). Over 19-135 the chain is Extracellular; sequence LWVSQPPEIR…VVEKEHPQLG (117 aa). Cys39 and Cys108 are oxidised to a cystine. Asn42 and Asn121 each carry an N-linked (GlcNAc...) asparagine glycan. A helical transmembrane segment spans residues 136–156; that stretch reads AGTVLLLRAGFYAVSFLSVAV. Over 157–201 the chain is Cytoplasmic; sequence GSTVYYQGKCLTWKGPRRQLPAVVPAPLPPPCGSSAHLLPPVPGG.

It belongs to the natural cytotoxicity receptor (NCR) family. As to quaternary structure, homodimer in the unliganted form. Interacts with CD3Z. Interacts with and is activated by binding to NCR3LG1. Interacts with and is activated by binding to BAG6. Interacts with and is inhibited by binding to LGALS3. As to expression, selectively expressed by all resting and activated NK cells and weakly expressed in spleen.

The protein localises to the cell membrane. Its function is as follows. Cell membrane receptor of natural killer/NK cells that is activated by binding of extracellular ligands including BAG6 and NCR3LG1. Stimulates NK cells cytotoxicity toward neighboring cells producing these ligands. It controls, for instance, NK cells cytotoxicity against tumor cells. Engagement of NCR3 by BAG6 also promotes myeloid dendritic cells (DC) maturation, both through killing DCs that did not acquire a mature phenotype, and inducing the release by NK cells of TNFA and IFNG which promote DC maturation. In Homo sapiens (Human), this protein is Natural cytotoxicity triggering receptor 3.